The chain runs to 482 residues: MSIRVRFAPSPTGPLHIGGARSALFNWLYARHHGGQFLVRIEDTDMERSSRESEENILNALRWLGIDWDEGIEVGGPNGPYRQTERLDIYRQLAKELVDAGHAYYCYCSEEELAVEREALMEKGELPRYLGRCRNLCPEDKAKFEAEGKKPVLRFRVPENQTITINDHVRGQVEFESNGIGDFIIMKSDNIPTYNFAVVVDDHDMGITHVVRAEEHLSNTPRQILIYEALGWQKPEFAHISLILGKDRSKMSKRHGATSIEQYHNLGYLPEALVNFLALLGWSPGGEEEIFTLKEIKEQFTLDRVAKNPAVFDIDKLNWLNGHYIRQASVERLTKLAVPYLQGAGYLKEEISTEKMAWLEQVVAIARNYISYMQEITQHVDVFFRDNVEITEEDAKQVQGWEQMPVVMKAAHELFSAANELTEESVKAIIKAIGKQTGLKGKFIFQPLRVGITGQTHGPELHQIIPVIGKERTLARLEAALK.

The 'HIGH' region motif lies at 9-19 (PSPTGPLHIGG). A 'KMSKS' region motif is present at residues 250–254 (KMSKR). ATP is bound at residue Lys-253.

It belongs to the class-I aminoacyl-tRNA synthetase family. Glutamate--tRNA ligase type 1 subfamily. In terms of assembly, monomer.

It localises to the cytoplasm. The catalysed reaction is tRNA(Glu) + L-glutamate + ATP = L-glutamyl-tRNA(Glu) + AMP + diphosphate. Catalyzes the attachment of glutamate to tRNA(Glu) in a two-step reaction: glutamate is first activated by ATP to form Glu-AMP and then transferred to the acceptor end of tRNA(Glu). The chain is Glutamate--tRNA ligase from Desulforamulus reducens (strain ATCC BAA-1160 / DSM 100696 / MI-1) (Desulfotomaculum reducens).